The primary structure comprises 209 residues: Holliday junction branch migration complex subunit RuvA (209 aa).

The interval 1-64 is domain I; sequence MIGRIRGMLI…EDAQSLYGFA (64 aa). Residues 65-143 are domain II; sequence SRLDRNLFRL…QLEGQFVPSQ (79 aa). A flexible linker region spans residues 144 to 157; it reads PDVPTGAGAATASQ. Positions 158-209 are domain III; the sequence is AGPDPREEAEAALIALGYKPQEAAKAISKVAGPDMNSETLIRLALKNMIPAG.

The protein belongs to the RuvA family. In terms of assembly, homotetramer. Forms an RuvA(8)-RuvB(12)-Holliday junction (HJ) complex. HJ DNA is sandwiched between 2 RuvA tetramers; dsDNA enters through RuvA and exits via RuvB. An RuvB hexamer assembles on each DNA strand where it exits the tetramer. Each RuvB hexamer is contacted by two RuvA subunits (via domain III) on 2 adjacent RuvB subunits; this complex drives branch migration. In the full resolvosome a probable DNA-RuvA(4)-RuvB(12)-RuvC(2) complex forms which resolves the HJ.

It is found in the cytoplasm. In terms of biological role, the RuvA-RuvB-RuvC complex processes Holliday junction (HJ) DNA during genetic recombination and DNA repair, while the RuvA-RuvB complex plays an important role in the rescue of blocked DNA replication forks via replication fork reversal (RFR). RuvA specifically binds to HJ cruciform DNA, conferring on it an open structure. The RuvB hexamer acts as an ATP-dependent pump, pulling dsDNA into and through the RuvAB complex. HJ branch migration allows RuvC to scan DNA until it finds its consensus sequence, where it cleaves and resolves the cruciform DNA. The chain is Holliday junction branch migration complex subunit RuvA from Marinobacter nauticus (strain ATCC 700491 / DSM 11845 / VT8) (Marinobacter aquaeolei).